A 231-amino-acid chain; its full sequence is NADH-ubiquinone oxidoreductase chain 4 (231 aa).

Helical transmembrane passes span 1–21, 34–54, 63–85, 89–111, 128–148, and 156–176; these read PIAG…YGII, LFLP…LTCL, IAYS…TPWG, AMAL…NTTY, ILPM…AIPP, and LLIM…LGLS.

This sequence belongs to the complex I subunit 4 family.

The protein localises to the mitochondrion membrane. It catalyses the reaction a ubiquinone + NADH + 5 H(+)(in) = a ubiquinol + NAD(+) + 4 H(+)(out). Its function is as follows. Core subunit of the mitochondrial membrane respiratory chain NADH dehydrogenase (Complex I) that is believed to belong to the minimal assembly required for catalysis. Complex I functions in the transfer of electrons from NADH to the respiratory chain. The immediate electron acceptor for the enzyme is believed to be ubiquinone. This Crotalus concolor (Midget faded rattlesnake) protein is NADH-ubiquinone oxidoreductase chain 4 (MT-ND4).